Reading from the N-terminus, the 334-residue chain is Galactinol synthase 4 (334 aa).

Lys104 is a catalytic residue. Mn(2+) is bound by residues Asp120, Asp122, and His258.

Belongs to the glycosyltransferase 8 family. Galactosyltransferase subfamily. Requires a divalent metal cation as cofactor.

The protein localises to the cytoplasm. It carries out the reaction myo-inositol + UDP-alpha-D-galactose = alpha-D-galactosyl-(1-&gt;3)-1D-myo-inositol + UDP + H(+). Galactinol synthase involved in the biosynthesis of raffinose family oligosaccharides (RFOs) that function as osmoprotectants. May promote plant stress tolerance. In Arabidopsis thaliana (Mouse-ear cress), this protein is Galactinol synthase 4 (GOLS4).